The primary structure comprises 143 residues: Large ribosomal subunit protein uL15 (143 aa).

The tract at residues 1 to 51 is disordered; the sequence is MRLNSIAPAPGSRPSAKRVGRGIGSGLGKTAGRGHKGQKARAGGYHKVGFE. Gly residues predominate over residues 21–31; the sequence is RGIGSGLGKTA.

The protein belongs to the universal ribosomal protein uL15 family. As to quaternary structure, part of the 50S ribosomal subunit.

Functionally, binds to the 23S rRNA. The chain is Large ribosomal subunit protein uL15 from Thioalkalivibrio sulfidiphilus (strain HL-EbGR7).